A 379-amino-acid polypeptide reads, in one-letter code: Retron Se72 reverse transcriptase (379 aa).

The Reverse transcriptase domain occupies 1–245 (MNKPRFNGTP…SKLSVTGLWV (245 aa)). Residues Asp109, Asp188, and Asp189 each coordinate Mg(2+).

It belongs to the bacterial reverse transcriptase family.

It carries out the reaction DNA(n) + a 2'-deoxyribonucleoside 5'-triphosphate = DNA(n+1) + diphosphate. In terms of biological role, reverse transcriptase (RT) component of antiviral defense system retron Se72, composed of a non-coding RNA (ncRNA), this reverse transcriptase (RT) and the following cold shock-like protein. Expression of retron Se72 confers protection against bacteriophage lambda. At multiplicity of infection (MOI) of 0.02 cultures slow growth when infected with lambda but do not collapse, at MOI 2 cultures enter growth stasis. Responsible for synthesis of msDNA (a branched molecule with RNA linked by a 2',5'-phosphodiester bond to ssDNA). The retron transcript serves as primer (from a conserved internal G residue) and template for the reaction, and codes for the RT. The DNA segment is predicted to be 72 bases long. In Salmonella heidelberg (strain 579083-10), this protein is Retron Se72 reverse transcriptase.